We begin with the raw amino-acid sequence, 628 residues long: (-)-beta-pinene synthase 1, chloroplastic (628 aa).

Residues 1–51 (MDLISVLPSASKSCVCLHKPLSSSTHKLKPFCRTIRILGMPRPRKSVLMVS) constitute a chloroplast transit peptide. Mg(2+) is bound by residues Asp-379, Asp-383, and Asp-531. A DDXXD motif motif is present at residues 379-383 (DDMYD).

It belongs to the terpene synthase family. Tpsd subfamily. Mg(2+) serves as cofactor. The cofactor is Mn(2+).

Its subcellular location is the plastid. The protein resides in the chloroplast. It catalyses the reaction (2E)-geranyl diphosphate = (1S,5S)-beta-pinene + diphosphate. The enzyme catalyses (2E)-geranyl diphosphate = (1S,5S)-alpha-pinene + diphosphate. Its pathway is terpene metabolism; oleoresin biosynthesis. It functions in the pathway secondary metabolite biosynthesis; terpenoid biosynthesis. In terms of biological role, monoterpene synthase (TPS) involved in the biosynthesis of monoterpene natural products included in conifer oleoresin secretions and volatile emissions; these compounds contribute to biotic and abiotic stress defense against herbivores and pathogens. Catalyzes the conversion of (2E)-geranyl diphosphate (GPP) to (-)-beta-pinene and, to a lower extent, to (-)-alpha-pinene. The polypeptide is (-)-beta-pinene synthase 1, chloroplastic (Pinus banksiana (Jack pine)).